The sequence spans 318 residues: Protein W (318 aa).

Disordered regions lie at residues 1–23 (MDQDALISKEDSEVEREASGGRE) and 54–318 (INTL…KKGA). 4 stretches are compositionally biased toward basic and acidic residues: residues 7-20 (ISKEDSEVEREASG), 99-110 (AEAHARNVDKQN), 150-168 (GAEDENREMAANPDKRGED), and 175-193 (EEIRRSAPLPDEREGRADN). 3 positions are modified to phosphoserine; by host: Ser-249, Ser-257, and Ser-260.

In Sendai virus (strain Ohita) (SeV), this protein is Protein W (P/V/C).